The following is a 522-amino-acid chain: Maturase K (522 aa).

It belongs to the intron maturase 2 family. MatK subfamily.

The protein localises to the plastid. It localises to the chloroplast. In terms of biological role, usually encoded in the trnK tRNA gene intron. Probably assists in splicing its own and other chloroplast group II introns. This is Maturase K from Gladiolus papilio (Goldblotch gladiolus).